We begin with the raw amino-acid sequence, 299 residues long: MSTFSASDFNSERYSSSRPSYPSDFYKMIDEYHDGERKLLVDVGCGPGTATLQMAQELKPFEQIIGSDLSATMIKTAEVIKEGSPDTYKNVSFKISSSDDFKFLGADSVDKQKIDMITAVECAHWFDFEKFQRSAYANLRKDGTIAIWGYADPIFPDYPEFDDLMIEVPYGKQGLGPYWEQPGRSRLRNMLKDSHLDPELFHDIQVSYFCAEDVRDKVKLHQHTKKPLLIRKQVTLVEFADYVRTWSAYHQWKQDPKNKDKEDVADWFIKESLRRRPELSTNTKIEVVWNTFYKLGKRV.

Ser2 is subject to N-acetylserine.

This sequence belongs to the methyltransferase superfamily. Tam family.

The protein resides in the cytoplasm. It catalyses the reaction trans-aconitate + S-adenosyl-L-methionine = (E)-2-(methoxycarbonylmethyl)but-2-enedioate + S-adenosyl-L-homocysteine. Functionally, catalyzes the S-adenosylmethionine monomethyl esterification of trans-aconitate and 3-isopropylmalate at high affinity and of other molecules like cis-aconitate, isocitrate, and citrate at lower velocities and affinities. The function of trans-aconitate methylation appears to be in reducing the toxicity of this spontaneous breakdown product of cis-aconitate. The role of 3-isopropylmalate methylation is unclear but may represent a metabolic branch at 3-isopropylmalate, where some of the material is taken in the pathway leading to leucine and some is taken in a pathway to the 3-isopropylmalate methyl ester, a molecule that provides a signal to switch from vegetative to invasive growth in response to amino acid starvation. The polypeptide is Trans-aconitate 3-methyltransferase (TMT1) (Saccharomyces cerevisiae (strain ATCC 204508 / S288c) (Baker's yeast)).